The following is a 264-amino-acid chain: Thymidylate synthase (264 aa).

Arg-21 is a binding site for dUMP. Residue His-51 coordinates (6R)-5,10-methylene-5,6,7,8-tetrahydrofolate. 126–127 (RR) lines the dUMP pocket. Cys-146 (nucleophile) is an active-site residue. DUMP contacts are provided by residues 166 to 169 (RSCD), Asn-177, and 207 to 209 (HLY). Residue Asp-169 participates in (6R)-5,10-methylene-5,6,7,8-tetrahydrofolate binding. Ser-263 provides a ligand contact to (6R)-5,10-methylene-5,6,7,8-tetrahydrofolate.

This sequence belongs to the thymidylate synthase family. Bacterial-type ThyA subfamily. As to quaternary structure, homodimer.

It localises to the cytoplasm. It carries out the reaction dUMP + (6R)-5,10-methylene-5,6,7,8-tetrahydrofolate = 7,8-dihydrofolate + dTMP. Its pathway is pyrimidine metabolism; dTTP biosynthesis. Catalyzes the reductive methylation of 2'-deoxyuridine-5'-monophosphate (dUMP) to 2'-deoxythymidine-5'-monophosphate (dTMP) while utilizing 5,10-methylenetetrahydrofolate (mTHF) as the methyl donor and reductant in the reaction, yielding dihydrofolate (DHF) as a by-product. This enzymatic reaction provides an intracellular de novo source of dTMP, an essential precursor for DNA biosynthesis. This Buchnera aphidicola subsp. Acyrthosiphon pisum (strain Tuc7) protein is Thymidylate synthase.